Reading from the N-terminus, the 374-residue chain is Probable neutral protease 2 homolog ARB_00849 (374 aa).

The signal sequence occupies residues 1–19; the sequence is MKFLTALSAIGALVATATA. The propeptide occupies 20-189; sequence AAVPNTPAKQ…KKSRGTIDKR (170 aa). 2 disulfides stabilise this stretch: Cys-197–Cys-268 and Cys-275–Cys-293. Residue His-318 participates in Zn(2+) binding. Glu-319 is a catalytic residue. 2 residues coordinate Zn(2+): His-322 and Asp-333.

The protein belongs to the peptidase M35 family. It depends on Zn(2+) as a cofactor.

Its subcellular location is the secreted. The catalysed reaction is Preferential cleavage of bonds with hydrophobic residues in P1'. Also 3-Asn-|-Gln-4 and 8-Gly-|-Ser-9 bonds in insulin B chain.. In terms of biological role, probable secreted metalloprotease that shows high activities on basic nuclear substrates such as histone and protamine. May be involved in virulence. The chain is Probable neutral protease 2 homolog ARB_00849 from Arthroderma benhamiae (strain ATCC MYA-4681 / CBS 112371) (Trichophyton mentagrophytes).